A 351-amino-acid polypeptide reads, in one-letter code: Transcription elongation factor A N-terminal and central domain-containing protein (351 aa).

Residues 5–82 enclose the TFIIS N-terminal domain; sequence NQIAARASLI…SKWKAVYKQT (78 aa). Disordered stretches follow at residues 86-119 and 144-169; these read ARNS…GICS and LKPK…LLDP. The span at 103-119 shows a compositional bias: polar residues; sequence SGPSHDPSQNETLGICS. Residues 145–165 are compositionally biased toward basic and acidic residues; that stretch reads KPKEEHFGDGDPESTGKRSSE. In terms of domain architecture, TFIIS central spans 173–289; that stretch reads MRTKCIELLY…EHYLPQVIDG (117 aa).

This Homo sapiens (Human) protein is Transcription elongation factor A N-terminal and central domain-containing protein (TCEANC).